Here is an 83-residue protein sequence, read N- to C-terminus: Large ribosomal subunit protein bL27 (83 aa).

Belongs to the bacterial ribosomal protein bL27 family.

The sequence is that of Large ribosomal subunit protein bL27 from Thermotoga neapolitana (strain ATCC 49049 / DSM 4359 / NBRC 107923 / NS-E).